Consider the following 335-residue polypeptide: MFSRVRGFLSCQNYSHTATPAITLPSSGSANFAGVEYPLLPLDQHTPLLFQWFERNPSRFGENQIPIINTQQNPYLNNIINAAIIEKERTIGVLVDGNFSAGQKKALAKLEKQYENIKVIYNSDLDYSMYDKKLSDIYLENIAKIEAQPANVRDEYLLGEIKKSLNEVLKNNPEESLVSSHDKRLGHVRFDFYRNLFLLKGSNAFLEAGKHGCHHLQPGGGCIYLDADMLLTGKLGTLYLPDGIAVHVSRKGNSMSLENGIIAVNRSEHPALKKGLEIMHSKPYGDPYIDGVCGGLRHYFNCSIRHNYEEFCNFIEFKHEHIFMDTSSLTISSWR.

Residues 51–53 (QWF) and Tyr-75 each bind UDP-N-acetyl-alpha-D-glucosamine. N-beta-linked (GlcNAc) arginine; by autocatalysis glycosylation is found at Arg-153 and Arg-184. A UDP-N-acetyl-alpha-D-glucosamine-binding site is contributed by 224 to 227 (YLDA). The DXD motif signature appears at 226-228 (DAD). Asp-228 is a binding site for Mn(2+). Glu-258 acts as the Proton acceptor in catalysis. N-beta-linked (GlcNAc) arginine; by autocatalysis glycosylation is present at Arg-305. Mn(2+) is bound by residues Asp-325 and Ser-327. Residues Ser-327 and 332 to 335 (SSWR) contribute to the UDP-N-acetyl-alpha-D-glucosamine site. Arg-335 carries an N-beta-linked (GlcNAc) arginine; by autocatalysis glycan.

The protein belongs to the glycosyltransferase NleB family. Interacts with host TRIM32; without mediating its GlcNAcylation. The cofactor is Mn(2+). Auto-glycosylated: arginine GlcNAcylation is required for activity toward death domain-containing host target proteins.

Its subcellular location is the secreted. The protein resides in the host Golgi apparatus. It carries out the reaction L-arginyl-[protein] + UDP-N-acetyl-alpha-D-glucosamine = N(omega)-(N-acetyl-beta-D-glucosaminyl)-L-arginyl-[protein] + UDP + H(+). Its function is as follows. Protein-arginine N-acetylglucosaminyltransferase effector that disrupts TNF signaling in infected cells, including NF-kappa-B signaling and apoptosis. Acts by catalyzing the transfer of a single N-acetylglucosamine (GlcNAc) to a conserved arginine residue in the death domain of host proteins such as TRADD, TNFRSF1A/TNFR1 and TNFRSF10B/TRAILR2: arginine GlcNAcylation prevents homotypic/heterotypic death domain interactions and assembly of the oligomeric TNF-alpha receptor complex, thereby disrupting TNF signaling. Also acts on host proteins without a death domain: catalyzes arginine GlcNAcylation of host small Rab GTPase (Rab1, Rab5 and Rab11), thereby preventing GTPase activity and leading to impaired host vesicular protein transport. Also mediates auto-GlcNAcylation, which is required for activity toward death domain-containing host target proteins. This is Protein-arginine N-acetylglucosaminyltransferase SseK3 from Salmonella typhimurium (strain SL1344).